The sequence spans 30 residues: Cyclotide hyen-F (30 aa).

A cross-link (cyclopeptide (Gly-Asn)) is located at residues 1 to 30 (GLPCGESCVYIPCISTVLGCSCSNKVCYRN). Disulfide bonds link cysteine 4–cysteine 20, cysteine 8–cysteine 22, and cysteine 13–cysteine 27.

In terms of processing, this is a cyclic peptide. As to expression, detected in seeds (at protein level).

Functionally, probably participates in a plant defense mechanism. In Pigea enneasperma (Spade flower), this protein is Cyclotide hyen-F.